We begin with the raw amino-acid sequence, 614 residues long: UvrABC system protein C (614 aa).

Residues 14–91 (TSPGCYIHKD…IKENKPKYNI (78 aa)) form the GIY-YIG domain. The UVR domain maps to 196 to 231 (DKIIDDLKSKMAVAAQSMEFERAAEYRDLIQAIGTL). Residues 595-614 (LSQVAEERVDYQTEGNHNEP) form a disordered region. Basic and acidic residues predominate over residues 599–614 (AEERVDYQTEGNHNEP).

It belongs to the UvrC family. In terms of assembly, interacts with UvrB in an incision complex.

The protein resides in the cytoplasm. Its function is as follows. The UvrABC repair system catalyzes the recognition and processing of DNA lesions. UvrC both incises the 5' and 3' sides of the lesion. The N-terminal half is responsible for the 3' incision and the C-terminal half is responsible for the 5' incision. The chain is UvrABC system protein C from Streptococcus pneumoniae serotype 2 (strain D39 / NCTC 7466).